The following is a 367-amino-acid chain: Inner membrane amino-acid ABC transporter permease protein YhdY (367 aa).

Over 1–36 (MTKVLLSHPPRPASHNSSRAMVWVRKNLFSSWSNSL) the chain is Cytoplasmic. Residues 37–57 (LTIGCIWLMWELIPPLLNWAF) traverse the membrane as a helical segment. Residues 58 to 99 (LQANWVGSTRADCTKAGACWVFIHERFGQFMYGLYPHDQRWR) are Periplasmic-facing. A helical transmembrane segment spans residues 100–120 (INLALLIGLVSIAPMFWKILP). The Cytoplasmic portion of the chain corresponds to 121–125 (HRGRY). The helical transmembrane segment at 126 to 146 (IAAWAVIYPLIVWWLMYGGFF) threads the bilayer. At 147–162 (ALERVETRQWGGLTLT) the chain is on the periplasmic side. The 195-residue stretch at 159 to 353 (LTLTLIIASV…IFCFSMSRYS (195 aa)) folds into the ABC transmembrane type-1 domain. A helical membrane pass occupies residues 163 to 183 (LIIASVGIAGALPWGILLALG). Over 184 to 192 (RRSHMPIVR) the chain is Cytoplasmic. The chain crosses the membrane as a helical span at residues 193–213 (ILSVIFIEFWRGVPLITVLFM). Residues 214–233 (SSVMLPLFMAEGTSIDKLIR) lie on the Periplasmic side of the membrane. Residues 234-254 (ALVGVILFQSAYVAEVVRGGL) form a helical membrane-spanning segment. Over 255-291 (QALPKGQYEAAESLALGYWKTQGLVILPQALKLVIPG) the chain is Cytoplasmic. Residues 292 to 312 (LVNTIIALFKDTSLVIIIGLF) form a helical membrane-spanning segment. The Periplasmic segment spans residues 313-326 (DLFSSVQQATVDPA). The helical transmembrane segment at 327–347 (WLGMSTEGYVFAALIYWIFCF) threads the bilayer. Topologically, residues 348–367 (SMSRYSQYLEKRFNTGRTPH) are cytoplasmic.

Belongs to the binding-protein-dependent transport system permease family. HisMQ subfamily.

It is found in the cell inner membrane. Functionally, probably part of the binding-protein-dependent transport system YdhWXYZ for an amino acid; probably responsible for the translocation of the substrate across the membrane. The sequence is that of Inner membrane amino-acid ABC transporter permease protein YhdY (yhdY) from Escherichia coli (strain K12).